Here is an 894-residue protein sequence, read N- to C-terminus: Translation initiation factor IF-2 (894 aa).

Positions 25-304 (ADAGMNKASS…KPTSMQHGFD (280 aa)) are disordered. 5 stretches are compositionally biased toward basic and acidic residues: residues 33–44 (SSDHVSDEEKQK), 52–62 (EHGDKSGESEP), 101–174 (STIE…KEMN), 184–239 (AKKE…ENSD), and 247–263 (YAREAEDAADRKEEGGA). Over residues 283–293 (RGGKGRNKGKL) the composition is skewed to basic residues. A tr-type G domain is found at 393–562 (PRAPVVTIMG…LLQSEVLELT (170 aa)). The interval 402 to 409 (GHVDHGKT) is G1. 402 to 409 (GHVDHGKT) contacts GTP. Residues 427 to 431 (GITQH) form a G2 region. The tract at residues 448-451 (DTPG) is G3. Residues 448–452 (DTPGH) and 502–505 (NKID) each bind GTP. Residues 502–505 (NKID) are G4. The tract at residues 538 to 540 (SAK) is G5.

This sequence belongs to the TRAFAC class translation factor GTPase superfamily. Classic translation factor GTPase family. IF-2 subfamily.

It localises to the cytoplasm. One of the essential components for the initiation of protein synthesis. Protects formylmethionyl-tRNA from spontaneous hydrolysis and promotes its binding to the 30S ribosomal subunits. Also involved in the hydrolysis of GTP during the formation of the 70S ribosomal complex. This Vibrio campbellii (strain ATCC BAA-1116) protein is Translation initiation factor IF-2.